The chain runs to 31 residues: AFCNLRRCELSCRSLGLLGKCIGEECKCVPH.

3 disulfides stabilise this stretch: Cys-3/Cys-21, Cys-8/Cys-26, and Cys-12/Cys-28. The [R/K]XCQ motif stretch occupies residues 6 to 9; that stretch reads RRCE. Histidine amide is present on His-31.

In terms of tissue distribution, expressed by the venom gland.

The protein resides in the secreted. In terms of biological role, blocks small conductance calcium-activated potassium channels. The sequence is that of Potassium channel toxin alpha-KTx 5.5 from Hottentotta tamulus (Eastern Indian scorpion).